The following is a 207-amino-acid chain: Outer-membrane lipoprotein LolB (207 aa).

Positions 1–21 (MTLPDFRLIRLLPLASLVLTA) are cleaved as a signal peptide. A lipid anchor (N-palmitoyl cysteine) is attached at cysteine 22. Cysteine 22 is lipidated: S-diacylglycerol cysteine.

This sequence belongs to the LolB family. In terms of assembly, monomer.

The protein resides in the cell outer membrane. Its function is as follows. Plays a critical role in the incorporation of lipoproteins in the outer membrane after they are released by the LolA protein. This is Outer-membrane lipoprotein LolB from Salmonella typhi.